The following is a 201-amino-acid chain: Protein Thf1 (201 aa).

A coiled-coil region spans residues 174–201 (IYKSSISKMEQAKELIQEQRIKDKKKTL).

It belongs to the THF1 family.

May be involved in photosynthetic membrane biogenesis. The sequence is that of Protein Thf1 from Prochlorococcus marinus (strain MIT 9312).